A 603-amino-acid polypeptide reads, in one-letter code: NADH-quinone oxidoreductase subunit C/D (603 aa).

Positions 1 to 193 (MVNNMTDLTA…DPFTLTKQKE (193 aa)) are NADH dehydrogenase I subunit C. The segment at 217–603 (DFMFLNLGPN…IDFVMSDVDR (387 aa)) is NADH dehydrogenase I subunit D.

This sequence in the N-terminal section; belongs to the complex I 30 kDa subunit family. It in the C-terminal section; belongs to the complex I 49 kDa subunit family. In terms of assembly, NDH-1 is composed of 13 different subunits. Subunits NuoB, CD, E, F, and G constitute the peripheral sector of the complex.

It is found in the cell inner membrane. It carries out the reaction a quinone + NADH + 5 H(+)(in) = a quinol + NAD(+) + 4 H(+)(out). In terms of biological role, NDH-1 shuttles electrons from NADH, via FMN and iron-sulfur (Fe-S) centers, to quinones in the respiratory chain. The immediate electron acceptor for the enzyme in this species is believed to be ubiquinone. Couples the redox reaction to proton translocation (for every two electrons transferred, four hydrogen ions are translocated across the cytoplasmic membrane), and thus conserves the redox energy in a proton gradient. This is NADH-quinone oxidoreductase subunit C/D from Cronobacter sakazakii (strain ATCC BAA-894) (Enterobacter sakazakii).